We begin with the raw amino-acid sequence, 501 residues long: Pyruvate kinase (501 aa).

Arg-50 serves as a coordination point for substrate. K(+) contacts are provided by Asn-52, Ser-54, Asp-85, and Thr-86. 52–55 (NFSH) lines the ATP pocket. Arg-92 and Lys-178 together coordinate ATP. Glu-243 is a Mg(2+) binding site. Residues Gly-266, Asp-267, and Thr-299 each contribute to the substrate site. Residue Asp-267 coordinates Mg(2+).

The protein belongs to the pyruvate kinase family. As to quaternary structure, homotetramer. The cofactor is Mg(2+). It depends on K(+) as a cofactor.

It carries out the reaction pyruvate + ATP = phosphoenolpyruvate + ADP + H(+). Its pathway is carbohydrate degradation; glycolysis; pyruvate from D-glyceraldehyde 3-phosphate: step 5/5. This Kluyveromyces lactis (strain ATCC 8585 / CBS 2359 / DSM 70799 / NBRC 1267 / NRRL Y-1140 / WM37) (Yeast) protein is Pyruvate kinase (PYK1).